The primary structure comprises 102 residues: MSDQATALKIKPLGDRILVKREEEDTTSHGGIILPDTAKKKQDRAEVLALGTGKRDKDGQILPFEVKVGDIVLIDKYAGQELTIEGEEYVIVQESEVMAVLN.

This sequence belongs to the GroES chaperonin family. Heptamer of 7 subunits arranged in a ring. Interacts with the chaperonin GroEL.

The protein localises to the cytoplasm. Functionally, together with the chaperonin GroEL, plays an essential role in assisting protein folding. The GroEL-GroES system forms a nano-cage that allows encapsulation of the non-native substrate proteins and provides a physical environment optimized to promote and accelerate protein folding. GroES binds to the apical surface of the GroEL ring, thereby capping the opening of the GroEL channel. This chain is Co-chaperonin GroES, found in Chlamydia felis (strain Fe/C-56) (Chlamydophila felis).